Reading from the N-terminus, the 1311-residue chain is Sterol regulatory element-binding protein cleavage-activating protein (1311 aa).

The Cytoplasmic portion of the chain corresponds to 1-18 (MPLIDKLRERISRAFYSH). A helical transmembrane segment spans residues 19-39 (GLLCASYPIPIIILTALCILA). At 40-277 (SCYPLLKLPL…HIVHVHFKEE (238 aa)) the chain is on the lumenal side. Residues 46–282 (KLPLPGTGPV…HFKEEIGIAE (237 aa)) are loop-1. 2 N-linked (GlcNAc...) asparagine glycosylation sites follow: asparagine 242 and asparagine 261. Residues 278–298 (IGIAELIPLVTTYIILFAYIY) traverse the membrane as a helical segment. The 159-residue stretch at 282–440 (ELIPLVTTYI…MFFFTTVLSI (159 aa)) folds into the SSD domain. At 299–310 (FSTRKIDLVKSK) the chain is on the cytoplasmic side. A helical membrane pass occupies residues 311 to 331 (WGLALAAVVTVLSSLLMSVGL). The Lumenal segment spans residues 332–342 (CTLFGLTPTLN). The helical transmembrane segment at 343–363 (GGEIFPYLVVVIGLENVLVLT) threads the bilayer. Residues 364–399 (KSVVSTPVDLEVKLRIAQGLRNESWFIMKNMATELG) lie on the Cytoplasmic side of the membrane. The helical transmembrane segment at 400 to 420 (IILIGYFTLVPAIQEFCLFAV) threads the bilayer. Valine 421 is a topological domain (lumenal). The chain crosses the membrane as a helical span at residues 422-442 (GLVSDFFLQMFFFTTVLSIDI). Residues 443-512 (RRMELADLNK…FFARTRLAQR (70 aa)) are Cytoplasmic-facing. The short motif at 445 to 450 (MELADL) is the ER export signal element. Residues 513 to 533 (IIMAGTVVWIGILVYTDPAGL) form a helical membrane-spanning segment. The tract at residues 529 to 726 (DPAGLRNYLT…QTPADVTLYK (198 aa)) is loop-7. Over 534 to 723 (RNYLTVHVTE…TENQTPADVT (190 aa)) the chain is Lumenal. Asparagine 583 and asparagine 651 each carry an N-linked (GlcNAc...) asparagine glycan. A helical transmembrane segment spans residues 724–744 (LYKVAALGLASGIFLVLFFFL). The Cytoplasmic portion of the chain corresponds to 745-1311 (LYRLLCPKNY…YVPSVLEKLD (567 aa)). An interaction with srebf region spans residues 747 to 1311 (RLLCPKNYGQ…YVPSVLEKLD (565 aa)). WD repeat units follow at residues 790 to 827 (GHHM…CLTI), 997 to 1034 (SFES…LRCS), 1037 to 1076 (DGQS…NQLQ), 1109 to 1146 (AHRK…CLFT), 1149 to 1187 (GHSG…RVSH), 1190 to 1227 (GHRG…KLYS), and 1230 to 1267 (QDLG…LLQT).

The protein belongs to the WD repeat SCAP family. In terms of assembly, membrane region forms a homotetramer. Component of the SCAP-SREBP complex (composed of SCAP and srebf1/srebp1 or srebf2/srebp2). Forms a ternary complex with insig1 or insig2 through its transmembrane domains at high sterol concentrations. Interacts with the SEC23-SEC24 complex.

It is found in the endoplasmic reticulum membrane. The protein resides in the golgi apparatus membrane. The protein localises to the cytoplasmic vesicle. Its subcellular location is the COPII-coated vesicle membrane. In terms of biological role, escort protein required for cholesterol as well as lipid homeostasis. Regulates export of the SCAP-SREBP complex from the endoplasmic reticulum to the Golgi upon low cholesterol, thereby regulating the processing of sterol regulatory element-binding proteins (SREBPs) SREBF1/SREBP1 and SREBF2/SREBP2. At high sterol concentrations, formation of a ternary complex with INSIG (INSIG1 or INSIG2) leads to mask the ER export signal in SCAP, promoting retention of the complex in the endoplasmic reticulum. Low sterol concentrations trigger release of INSIG, a conformational change in the SSD domain of SCAP, unmasking of the ER export signal, promoting recruitment into COPII-coated vesicles and transport of the SCAP-SREBP to the Golgi: in the Golgi, SREBPs are then processed, releasing the transcription factor fragment of SREBPs from the membrane, its import into the nucleus and up-regulation of LDLR, INSIG1 and the mevalonate pathway. Binds cholesterol via its SSD domain. In Xenopus laevis (African clawed frog), this protein is Sterol regulatory element-binding protein cleavage-activating protein.